A 685-amino-acid chain; its full sequence is Polyphosphate kinase (685 aa).

Asparagine 45 is a binding site for ATP. Arginine 372 and arginine 402 together coordinate Mg(2+). A PLD phosphodiesterase 1 domain is found at 427 to 461 (PGLKIHAKLFLISRKEGDDVVRYAHIGTGNFNEKT). Histidine 432 functions as the Phosphohistidine intermediate in the catalytic mechanism. The ATP site is built by tyrosine 465, arginine 561, and histidine 589. Residues 584–614 (DRYLEHDRIYIFDNAGDKQVYLSSADWMTRN) form the PLD phosphodiesterase 2 domain.

The protein belongs to the polyphosphate kinase 1 (PPK1) family. Requires Mg(2+) as cofactor. An intermediate of this reaction is the autophosphorylated ppk in which a phosphate is covalently linked to a histidine residue through a N-P bond.

It catalyses the reaction [phosphate](n) + ATP = [phosphate](n+1) + ADP. Functionally, catalyzes the reversible transfer of the terminal phosphate of ATP to form a long-chain polyphosphate (polyP). This Klebsiella pneumoniae protein is Polyphosphate kinase.